Reading from the N-terminus, the 781-residue chain is Protein translocase subunit SecA 2 (781 aa).

Residues glutamine 85, 103–107 (GEGKT), and aspartate 491 contribute to the ATP site.

This sequence belongs to the SecA family. As to quaternary structure, monomer and homodimer. Part of the essential Sec protein translocation apparatus which comprises SecA, SecYEG and auxiliary proteins SecDF. Other proteins may also be involved.

It is found in the cell membrane. The protein localises to the cytoplasm. It carries out the reaction ATP + H2O + cellular proteinSide 1 = ADP + phosphate + cellular proteinSide 2.. Its function is as follows. Part of the Sec protein translocase complex. Interacts with the SecYEG preprotein conducting channel. Has a central role in coupling the hydrolysis of ATP to the transfer of proteins into and across the cell membrane, serving as an ATP-driven molecular motor driving the stepwise translocation of polypeptide chains across the membrane. The protein is Protein translocase subunit SecA 2 of Clostridioides difficile (strain 630) (Peptoclostridium difficile).